The primary structure comprises 225 residues: MSNETNCTLDFEQSVELFKEYNLFITAFLLFLTIILQYGYATRSKFIYILKMIVLWCFWPLNIAVGVISCIYPPNTGGLVAAIILTVFACLSFVGYWIQSIRLFKRCRSWWSFNPESNAVGSILLTNGQQCNFAIESVPTVLSPIIKNGFLYCEGQWLAKCEPDHLPKDIFVCTPDRRNIYRMVQKYTGDQSGNKKRFATFVYAKQSVDTGELESVATGGSSLYT.

At 1-20 (MSNETNCTLDFEQSVELFKE) the chain is on the virion surface side. Residues 21–41 (YNLFITAFLLFLTIILQYGYA) form a helical membrane-spanning segment. The Intravirion portion of the chain corresponds to 42 to 51 (TRSKFIYILK). A helical membrane pass occupies residues 52–72 (MIVLWCFWPLNIAVGVISCIY). Topologically, residues 73 to 77 (PPNTG) are virion surface. A helical membrane pass occupies residues 78 to 98 (GLVAAIILTVFACLSFVGYWI). Residues 99–225 (QSIRLFKRCR…VATGGSSLYT (127 aa)) are Intravirion-facing.

Belongs to the gammacoronaviruses M protein family. Homomultimer. Interacts with envelope E protein in the budding compartment of the host cell, which is located between endoplasmic reticulum and the Golgi complex. Forms a complex with HE and S proteins. Interacts with nucleocapsid N protein. This interaction probably participates in RNA packaging into the virus.

The protein resides in the virion membrane. The protein localises to the host Golgi apparatus membrane. Functionally, component of the viral envelope that plays a central role in virus morphogenesis and assembly via its interactions with other viral proteins. In Gallus gallus (Chicken), this protein is Membrane protein.